Here is a 155-residue protein sequence, read N- to C-terminus: MSRRSTAEKKTAKSDPIYHNRLVNMVVNRILKNGKKSLAYRILYRAIKKIQQKTDKNPLSVLRQAIRRVTPNVTVKARRVGGSTYRVPTEIRSTQGKVLAIRWLLGASRKRPGRNMNFKLSHELMDAARGNGNAIRKKEETHRMAEANRAFAHFR.

It belongs to the universal ribosomal protein uS7 family. Part of the 30S ribosomal subunit.

The protein localises to the plastid. It is found in the chloroplast. Its function is as follows. One of the primary rRNA binding proteins, it binds directly to 16S rRNA where it nucleates assembly of the head domain of the 30S subunit. This chain is Small ribosomal subunit protein uS7c (rps7), found in Pinus thunbergii (Japanese black pine).